Consider the following 361-residue polypeptide: SSRTVLSNISNIQRRPQVVGKIKKEDGVALEEKAPLNKGLGRMVSQSNLISDVQLKTTKIIPAYQDIADVEVPINAMINSFTELEVDDIDLEDLGNPTLCAEYLKDIYKYMNKLERRLEPSDYMAHQAEINFKMRSILVDWLIQVQSRFNLLQETLYLTIYIIDRYLSKQNVKRAELQLEGVTAMLIASKYEEMYAPEIGDFVYITDNAYSKEKIRQMEQKMLKTCEYDFSNPLCLHFLRRNSKAGAVDAQKHTLAKYLMELTLVEYEFITKLPSEIAAAALYLALKLIDDSNWTPTLAHYSGYTEDEILSTVSKLSILTLSMDNSKYQAVKNKYSASKFLRISLIPQLKGHILSKFAERN.

The protein belongs to the cyclin family. Cyclin AB subfamily.

In terms of biological role, essential for the control of the cell cycle at the G2/M (mitosis) transition. Interacts with the CDC2 protein kinase to form MPF. G2/M cyclins accumulate steadily during G2 and are abruptly destroyed at mitosis. The sequence is that of G2/mitotic-specific cyclin-B from Hydra vulgaris (Hydra).